The primary structure comprises 330 residues: Beta-1,6-galactofuranosyltransferase WbbI (330 aa).

The protein resides in the cytoplasm. It participates in bacterial outer membrane biogenesis; lipopolysaccharide biosynthesis. Functionally, involved in the transfer of galactofuranose (Galf) onto an alpha-D-gluco-configured acceptor substrate to form a beta-1,6-linkage. It uses n-octyl alpha-D-glucopyranoside as an acceptor substrate for the addition of galactofuranose from the donor substrate UDP-galactofuranose. It is not able to use beta-D-glucopyranoside isomers. The sequence is that of Beta-1,6-galactofuranosyltransferase WbbI (wbbI) from Escherichia coli (strain K12).